The following is a 420-amino-acid chain: UDP-N-acetylglucosamine 1-carboxyvinyltransferase (420 aa).

Position 22–23 (22–23 (KN)) interacts with phosphoenolpyruvate. Arg93 serves as a coordination point for UDP-N-acetyl-alpha-D-glucosamine. The active-site Proton donor is the Cys117. Cys117 carries the 2-(S-cysteinyl)pyruvic acid O-phosphothioketal modification. Residues 122–126 (RPVDL), Asp307, and Val329 each bind UDP-N-acetyl-alpha-D-glucosamine.

It belongs to the EPSP synthase family. MurA subfamily.

It localises to the cytoplasm. It catalyses the reaction phosphoenolpyruvate + UDP-N-acetyl-alpha-D-glucosamine = UDP-N-acetyl-3-O-(1-carboxyvinyl)-alpha-D-glucosamine + phosphate. It participates in cell wall biogenesis; peptidoglycan biosynthesis. In terms of biological role, cell wall formation. Adds enolpyruvyl to UDP-N-acetylglucosamine. The protein is UDP-N-acetylglucosamine 1-carboxyvinyltransferase of Hahella chejuensis (strain KCTC 2396).